The chain runs to 485 residues: Phenylalanine--tRNA ligase alpha subunit, cytoplasmic (485 aa).

L-phenylalanine contacts are provided by residues Thr318, 360-362, and Tyr400; that span reads QIE. Glu402 contacts Mg(2+). Phe426 contributes to the L-phenylalanine binding site.

It belongs to the class-II aminoacyl-tRNA synthetase family. Phe-tRNA synthetase alpha subunit type 2 subfamily. Tetramer of two alpha and two beta subunits. Requires Mg(2+) as cofactor.

The protein localises to the cytoplasm. The protein resides in the cytosol. The catalysed reaction is tRNA(Phe) + L-phenylalanine + ATP = L-phenylalanyl-tRNA(Phe) + AMP + diphosphate + H(+). This is Phenylalanine--tRNA ligase alpha subunit, cytoplasmic from Arabidopsis thaliana (Mouse-ear cress).